A 101-amino-acid polypeptide reads, in one-letter code: Cilia- and flagella-associated protein 141 (101 aa).

In terms of assembly, microtubule inner protein component of sperm flagellar doublet microtubules.

Its subcellular location is the cytoplasm. The protein resides in the cytoskeleton. It is found in the cilium axoneme. The protein localises to the flagellum axoneme. Its function is as follows. Microtubule inner protein (MIP) part of the dynein-decorated doublet microtubules (DMTs) in cilia axoneme, which is required for motile cilia beating. This Mus musculus (Mouse) protein is Cilia- and flagella-associated protein 141.